Consider the following 68-residue polypeptide: Large ribosomal subunit protein bL35 (68 aa).

This sequence belongs to the bacterial ribosomal protein bL35 family.

This chain is Large ribosomal subunit protein bL35, found in Rickettsia felis (strain ATCC VR-1525 / URRWXCal2) (Rickettsia azadi).